Reading from the N-terminus, the 264-residue chain is NAD-capped RNA hydrolase NudC (264 aa).

Positions 99 and 102 each coordinate Zn(2+). Residue Glu-112 coordinates substrate. Positions 117 and 120 each coordinate Zn(2+). A substrate-binding site is contributed by Tyr-125. The Nudix hydrolase domain occupies 126 to 253 (PVICPSIIVA…TIARKLIHAT (128 aa)). Positions 162, 178, and 182 each coordinate a divalent metal cation. The Nudix box motif lies at 163–184 (GFVEVGETFEQAVQREVFEETG). 196 to 203 (QPWAFPNS) lines the substrate pocket. A divalent metal cation is bound at residue Glu-223. Substrate is bound at residue Ala-246.

Belongs to the Nudix hydrolase family. NudC subfamily. As to quaternary structure, homodimer. Mg(2+) is required as a cofactor. Mn(2+) serves as cofactor. The cofactor is Zn(2+).

It carries out the reaction a 5'-end NAD(+)-phospho-ribonucleoside in mRNA + H2O = a 5'-end phospho-adenosine-phospho-ribonucleoside in mRNA + beta-nicotinamide D-ribonucleotide + 2 H(+). The catalysed reaction is NAD(+) + H2O = beta-nicotinamide D-ribonucleotide + AMP + 2 H(+). The enzyme catalyses NADH + H2O = reduced beta-nicotinamide D-ribonucleotide + AMP + 2 H(+). MRNA decapping enzyme that specifically removes the nicotinamide adenine dinucleotide (NAD) cap from a subset of mRNAs by hydrolyzing the diphosphate linkage to produce nicotinamide mononucleotide (NMN) and 5' monophosphate mRNA. The NAD-cap is present at the 5'-end of some mRNAs and stabilizes RNA against 5'-processing. Has preference for mRNAs with a 5'-end purine. Catalyzes the hydrolysis of a broad range of dinucleotide pyrophosphates. The chain is NAD-capped RNA hydrolase NudC from Haemophilus influenzae (strain PittGG).